A 252-amino-acid chain; its full sequence is Pyridoxine 5'-phosphate synthase (252 aa).

Asn8 and Arg19 together coordinate 3-amino-2-oxopropyl phosphate. His44 acts as the Proton acceptor in catalysis. 1-deoxy-D-xylulose 5-phosphate is bound by residues Arg46 and His51. The Proton acceptor role is filled by Glu75. Thr110 contacts 1-deoxy-D-xylulose 5-phosphate. His201 acts as the Proton donor in catalysis. 3-amino-2-oxopropyl phosphate contacts are provided by residues Asp202 and 224-225 (GH).

It belongs to the PNP synthase family. In terms of assembly, homooctamer; tetramer of dimers.

Its subcellular location is the cytoplasm. It carries out the reaction 3-amino-2-oxopropyl phosphate + 1-deoxy-D-xylulose 5-phosphate = pyridoxine 5'-phosphate + phosphate + 2 H2O + H(+). The protein operates within cofactor biosynthesis; pyridoxine 5'-phosphate biosynthesis; pyridoxine 5'-phosphate from D-erythrose 4-phosphate: step 5/5. In terms of biological role, catalyzes the complicated ring closure reaction between the two acyclic compounds 1-deoxy-D-xylulose-5-phosphate (DXP) and 3-amino-2-oxopropyl phosphate (1-amino-acetone-3-phosphate or AAP) to form pyridoxine 5'-phosphate (PNP) and inorganic phosphate. In Albidiferax ferrireducens (strain ATCC BAA-621 / DSM 15236 / T118) (Rhodoferax ferrireducens), this protein is Pyridoxine 5'-phosphate synthase.